The sequence spans 143 residues: Antitumor antibiotic C-1027 apoprotein (143 aa).

An N-terminal signal peptide occupies residues 1-33; it reads MSLRHMSRRASRFGVVAVASIGLAAAAQSVAFA. Disulfide bonds link Cys-69–Cys-78 and Cys-119–Cys-124.

This sequence belongs to the neocarzinostatin family.

Functionally, binds non-covalently to a chromophore which is the cytotoxic and mutagenic component of the antibiotic. The chromophore binds to DNA as a weak intercalator and causes single- and double-strand breaks. The polypeptide is Antitumor antibiotic C-1027 apoprotein (cagA) (Streptomyces globisporus).